The sequence spans 329 residues: Malate dehydrogenase (329 aa).

NAD(+) is bound at residue 12–18; it reads GAAGQIG. Positions 93 and 99 each coordinate substrate. Residues Asn-106, Gln-113, and 130–132 each bind NAD(+); that span reads TGN. Asn-132 and Arg-163 together coordinate substrate. The active-site Proton acceptor is His-188.

It belongs to the LDH/MDH superfamily. MDH type 2 family.

It catalyses the reaction (S)-malate + NAD(+) = oxaloacetate + NADH + H(+). Functionally, catalyzes the reversible oxidation of malate to oxaloacetate. In Mycobacterium bovis (strain ATCC BAA-935 / AF2122/97), this protein is Malate dehydrogenase.